A 389-amino-acid chain; its full sequence is Cytochrome b (389 aa).

The next 8 helical transmembrane spans lie at 32–52, 76–98, 113–133, 179–199, 225–245, 290–310, 325–345, and 353–373; these read FGFF…LLAM, WLLR…IHML, LWVS…LGYV, FFSL…LHII, FTIK…TFVF, LGVL…FLTI, LFWS…QPAA, and LYST…IYIV. The heme b site is built by His-82 and His-96. Residues His-183 and His-197 each coordinate heme b.

Belongs to the cytochrome b family. In terms of assembly, the main subunits of complex b-c1 are: cytochrome b, cytochrome c1 and the Rieske protein. The cofactor is heme b.

The protein resides in the mitochondrion inner membrane. Its function is as follows. Component of the ubiquinol-cytochrome c reductase complex (complex III or cytochrome b-c1 complex) that is part of the mitochondrial respiratory chain. The b-c1 complex mediates electron transfer from ubiquinol to cytochrome c. Contributes to the generation of a proton gradient across the mitochondrial membrane that is then used for ATP synthesis. This Dictyostelium discoideum (Social amoeba) protein is Cytochrome b (cytB).